The chain runs to 352 residues: Uroporphyrinogen decarboxylase (352 aa).

Substrate is bound by residues 29–33, Phe-48, Asp-78, Tyr-154, Ser-209, and His-322; that span reads RQAGR.

It belongs to the uroporphyrinogen decarboxylase family. As to quaternary structure, homodimer.

The protein localises to the cytoplasm. The catalysed reaction is uroporphyrinogen III + 4 H(+) = coproporphyrinogen III + 4 CO2. Its pathway is porphyrin-containing compound metabolism; protoporphyrin-IX biosynthesis; coproporphyrinogen-III from 5-aminolevulinate: step 4/4. In terms of biological role, catalyzes the decarboxylation of four acetate groups of uroporphyrinogen-III to yield coproporphyrinogen-III. The protein is Uroporphyrinogen decarboxylase of Bacillus pumilus (strain SAFR-032).